The following is a 620-amino-acid chain: Translation initiation factor IF-2 (620 aa).

Residues 126-295 (KRPPIVTIMG…IVTAEIMELK (170 aa)) enclose the tr-type G domain. The interval 135-142 (GHVDHGKT) is G1. Residue 135-142 (GHVDHGKT) participates in GTP binding. The interval 160 to 164 (NITQS) is G2. Positions 181–184 (DTPG) are G3. Residues 181–185 (DTPGH) and 235–238 (NKMD) contribute to the GTP site. The segment at 235 to 238 (NKMD) is G4. Residues 271–273 (SAL) are G5.

It belongs to the TRAFAC class translation factor GTPase superfamily. Classic translation factor GTPase family. IF-2 subfamily.

The protein resides in the cytoplasm. Functionally, one of the essential components for the initiation of protein synthesis. Protects formylmethionyl-tRNA from spontaneous hydrolysis and promotes its binding to the 30S ribosomal subunits. Also involved in the hydrolysis of GTP during the formation of the 70S ribosomal complex. This chain is Translation initiation factor IF-2, found in Malacoplasma penetrans (strain HF-2) (Mycoplasma penetrans).